Here is a 555-residue protein sequence, read N- to C-terminus: Polypyrimidine tract-binding protein 1 (555 aa).

Position 1 is an N-acetylmethionine (M1). Residue S16 is modified to Phosphoserine. RRM domains are found at residues 58-142, 183-259, and 361-412; these read RVIH…SSPN, LRII…FSKL, and SVLL…SQAQ. A Glycyl lysine isopeptide (Lys-Gly) (interchain with G-Cter in SUMO2) cross-link involves residue K64. The residue at position 126 (Y126) is a Phosphotyrosine. A Phosphothreonine modification is found at T137. A Phosphoserine modification is found at S140. A Glycyl lysine isopeptide (Lys-Gly) (interchain with G-Cter in SUMO2) cross-link involves residue K217. The tract at residues 435–457 is disordered; sequence HQSVQLPREGQEDQGLTKDYGSS. S457 is modified (phosphoserine). The 76-residue stretch at 478–553 folds into the RRM 4 domain; sequence ATLHLSNIPP…HHLRVSFSKS (76 aa).

Monomer. Part of a ternary complex containing KHSRP, PTBP1, PTBP2 and HNRPH1. Interacts with SFPQ. Interacts with RAVER1. Interacts with IVNS1ABP (via BACK domain); the interaction is direct. As to expression, expressed in myoblast; expression gradually decreases during muscle cell differentiation (at protein level).

It localises to the nucleus. Its function is as follows. Plays a role in pre-mRNA splicing and in the regulation of alternative splicing events. Activates exon skipping of its own pre-mRNA during muscle cell differentiation. Binds to the polypyrimidine tract of introns. May promote RNA looping when bound to two separate polypyrimidine tracts in the same pre-mRNA. May promote the binding of U2 snRNP to pre-mRNA. Cooperates with RAVER1 to modulate switching between mutually exclusive exons during maturation of the TPM1 pre-mRNA. Represses the splicing of MAPT/Tau exon 10. Binds to polypyrimidine-rich controlling element (PCE) of CFTR and promotes exon skipping of CFTR exon 9, thereby antagonizing TIA1 and its role in exon inclusion of CFTR exon 9. Plays a role in the splicing of pyruvate kinase PKM by binding repressively to a polypyrimidine tract flanking PKM exon 9, inhibiting exon 9 inclusion and resulting in exon 10 inclusion and production of the PKM M2 isoform. In Mus musculus (Mouse), this protein is Polypyrimidine tract-binding protein 1 (Ptbp1).